We begin with the raw amino-acid sequence, 333 residues long: 3-isopropylmalate/3-methylmalate dehydrogenase (333 aa).

Substrate-binding residues include arginine 81, arginine 91, arginine 112, and aspartate 203. Residues aspartate 203, aspartate 227, and aspartate 231 each contribute to the Mg(2+) site. 260-272 is an NAD(+) binding site; it reads GSAPDIAGKKIAN.

The protein belongs to the isocitrate and isopropylmalate dehydrogenases family. Homotetramer. Mg(2+) is required as a cofactor. Mn(2+) serves as cofactor.

Its subcellular location is the cytoplasm. The catalysed reaction is (2R,3S)-3-isopropylmalate + NAD(+) = 4-methyl-2-oxopentanoate + CO2 + NADH. It carries out the reaction (2R,3S)-3-methylmalate + NAD(+) = 2-oxobutanoate + CO2 + NADH. The enzyme catalyses (R)-malate + NAD(+) = pyruvate + CO2 + NADH. It functions in the pathway amino-acid biosynthesis; L-leucine biosynthesis; L-leucine from 3-methyl-2-oxobutanoate: step 3/4. It participates in amino-acid biosynthesis; L-isoleucine biosynthesis; 2-oxobutanoate from pyruvate: step 3/3. Its function is as follows. Catalyzes the oxidation of 3-carboxy-2-hydroxy-4-methylpentanoate (3-isopropylmalate) to 3-carboxy-4-methyl-2-oxopentanoate, which decarboxylates to 4-methyl-2-oxopentanoate (2-oxoisocaproate). Also catalyzes the oxidative decarboxylation of 3-methylmalate to 2-oxobutyrate, and that of D-malate to pyruvate. Cannot use NADP(+) instead of NAD(+). Cannot catalyze the oxidation of L-malate, L-tartrate, D-tartrate, DL-isocitrate, or DL-lactate. This Methanocaldococcus jannaschii (strain ATCC 43067 / DSM 2661 / JAL-1 / JCM 10045 / NBRC 100440) (Methanococcus jannaschii) protein is 3-isopropylmalate/3-methylmalate dehydrogenase (leuB).